A 340-amino-acid polypeptide reads, in one-letter code: Alcohol dehydrogenase patD (340 aa).

Cys-46 contacts Zn(2+). NAD(+) is bound at residue His-47. Zn(2+) contacts are provided by His-67, Glu-68, Cys-101, Cys-104, Cys-112, and Cys-154. Residue His-67 coordinates substrate. NAD(+)-binding positions include Gly-178–Gly-183, Val-198–Asp-203, Lys-206, Leu-265–Ile-267, Pro-289–Gly-291, and Glu-297–Ala-299.

This sequence belongs to the zinc-containing alcohol dehydrogenase family. It depends on Zn(2+) as a cofactor.

Its subcellular location is the cytoplasm. It localises to the cytosol. The enzyme catalyses neopatulin + NADPH + H(+) = (E)-ascladiol + NADP(+). Its pathway is mycotoxin biosynthesis; patulin biosynthesis. Functionally, alcohol dehydrogenase; part of the gene cluster that mediates the biosynthesis of patulin, an acetate-derived tetraketide mycotoxin produced by several fungal species that shows antimicrobial properties against several bacteria. PatD catalyzes the conversion of neopatulin into E-ascladiol. The pathway begins with the synthesis of 6-methylsalicylic acid by the polyketide synthase (PKS) patK via condensation of acetate and malonate units. The 6-methylsalicylic acid decarboxylase patG then catalyzes the decarboxylation of 6-methylsalicylic acid to yield m-cresol (also known as 3-methylphenol). These first reactions occur in the cytosol. The intermediate m-cresol is then transported into the endoplasmic reticulum where the cytochrome P450 monooxygenase patH converts it to m-hydroxybenzyl alcohol, which is further converted to gentisyl alcohol by the cytochrome P450 monooxygenase patI. The oxidoreductases patJ and patO further convert gentisyl alcohol to isoepoxydon in the vacuole. PatN catalyzes then the transformation of isoepoxydon into phyllostine. The cluster protein patF is responsible for the conversion from phyllostine to neopatulin whereas the alcohol dehydrogenase patD converts neopatulin to E-ascladiol. The steps between isoepoxydon and E-ascladiol occur in the cytosol, and E-ascladiol is probably secreted to the extracellular space by one of the cluster-specific transporters patC or patM. Finally, the secreted patulin synthase patE catalyzes the conversion of E-ascladiol to patulin. This Penicillium expansum (Blue mold rot fungus) protein is Alcohol dehydrogenase patD.